A 395-amino-acid polypeptide reads, in one-letter code: F-box/kelch-repeat protein SKIP25 (395 aa).

Residues 1 to 29 form a disordered region; the sequence is MEKKLKRRESMSTTAAESPPAKRRRTVTG. Residues 34–79 enclose the F-box domain; it reads ALIEGLPDHISEICLSLVHRPSLLSAVCTRWRRLLYSPEFPSFPSL. 5 Kelch repeats span residues 81–129, 147–194, 196–245, 246–299, and 301–342; these read ALFV…YRHP, LILI…ACDG, IYIA…FSRE, AIDA…AMEE, and ILYS…TQVT.

In terms of assembly, part of a SCF (ASK-cullin-F-box) protein ligase complex. Interacts with SKP1A/ASK1.

The protein resides in the nucleus. Its pathway is protein modification; protein ubiquitination. Component of SCF(ASK-cullin-F-box) E3 ubiquitin ligase complexes, which may mediate the ubiquitination and subsequent proteasomal degradation of target proteins. The polypeptide is F-box/kelch-repeat protein SKIP25 (SKIP25) (Arabidopsis thaliana (Mouse-ear cress)).